Consider the following 458-residue polypeptide: Tyrosine phenol-lyase (458 aa).

Position 258 is an N6-(pyridoxal phosphate)lysine (Lys-258).

Belongs to the beta-eliminating lyase family. Homotetramer. It depends on pyridoxal 5'-phosphate as a cofactor.

The enzyme catalyses L-tyrosine + H2O = phenol + pyruvate + NH4(+). The polypeptide is Tyrosine phenol-lyase (tpl) (Symbiobacterium thermophilum (strain DSM 24528 / JCM 14929 / IAM 14863 / T)).